A 122-amino-acid polypeptide reads, in one-letter code: C-C motif chemokine 9 (122 aa).

Residues 1–21 (MKPFHTALSFLILTTALGIWA) form the signal peptide. Disulfide bonds link C57-C80, C58-C96, and C67-C107.

It belongs to the intercrine beta (chemokine CC) family. In terms of processing, the N-terminal is proteolytically cleaved by proteases associated with inflammatory responses. The processed forms CCL9(29-101), CCL9(30-101) and CCL9(31-101) exhibit increase in CCR1-mediated signaling and chemotaxis assays in vitro. As to expression, expressed mainly in the liver, lung, and the thymus, although some expression has been detected in a wide variety of tissues except brain.

Its subcellular location is the secreted. Functionally, monokine with inflammatory, pyrogenic and chemokinetic properties. Circulates at high concentrations in the blood of healthy animals. Binding to a high-affinity receptor activates calcium release in neutrophils. It also inhibits colony formation of bone marrow myeloid immature progenitors. In Mus musculus (Mouse), this protein is C-C motif chemokine 9 (Ccl9).